A 498-amino-acid polypeptide reads, in one-letter code: Membrane-bound lytic murein transglycosylase F (498 aa).

Positions 1 to 29 (MFFKPDFRPRCAKWLIATGLFLMLGACVE) are cleaved as a signal peptide. The segment at 30 to 267 (KPTTLERVKE…RLKDRYYGHV (238 aa)) is non-LT domain. Positions 268–498 (DVLGYVGAYT…SSSSTDESPL (231 aa)) are LT domain. The active site involves Glu314. A disordered region spans residues 464 to 498 (VADGNLHVPGVDKTQPPVPPASPVPSSSSTDESPL).

The protein in the N-terminal section; belongs to the bacterial solute-binding protein 3 family. It in the C-terminal section; belongs to the transglycosylase Slt family.

It localises to the cell outer membrane. The enzyme catalyses Exolytic cleavage of the (1-&gt;4)-beta-glycosidic linkage between N-acetylmuramic acid (MurNAc) and N-acetylglucosamine (GlcNAc) residues in peptidoglycan, from either the reducing or the non-reducing ends of the peptidoglycan chains, with concomitant formation of a 1,6-anhydrobond in the MurNAc residue.. Its function is as follows. Murein-degrading enzyme that degrades murein glycan strands and insoluble, high-molecular weight murein sacculi, with the concomitant formation of a 1,6-anhydromuramoyl product. Lytic transglycosylases (LTs) play an integral role in the metabolism of the peptidoglycan (PG) sacculus. Their lytic action creates space within the PG sacculus to allow for its expansion as well as for the insertion of various structures such as secretion systems and flagella. The sequence is that of Membrane-bound lytic murein transglycosylase F from Pseudomonas syringae pv. syringae (strain B728a).